The chain runs to 597 residues: MAMKRKLNEHDVPEPESPQSPKRRASDASQSEPASPPAPTPAKEVVASFAELQLEPRLLRGIRDQKWGSPTAVQSKAIPLALQGRDILARSGTGTGKTGAYLLPILHNTLLRKGKTSLILVPTKELALQITKVAKALSAHCGQAVRIQNIAGKESEVVTKAKLADNPDIVIATPARASANINTGALAVTELAHLVVDEGDLVMGYGFKEDLDQIAQNIPKGVQMFLMSATLNTEVESLGSLLCNDPVVLKLDDLDKDSKRVKQYVIKCAEEEKFLLIYAMFKLGLIKGKTIVFVGDTDRSYRVKLFLEQFGIKSCVLNSELPLASRLHIVEEFNKNIYNILIASDETEILGSQKKADESRPKKKPKTDKEAKNDSGVSRGIDFLNVSCVLNFDFPATYKSYFHRIGRTARAGKSGTAISFIIPKDKYRKHKSTTFAGCENDEEVLKKVEKHQEAGQKLENYNFDMKRLEPFRYRFGDALRSVTRIAIREARIKEIRLELSKSQKLSRYFEENPEALAHLRHDQTLNHPARIQPHLKHVPDYLLPGGSRKPADVGFVGLNVPRVNKRQYVKGKGRKVVRRNGKVDPLKTFNARGKGKK.

A compositionally biased stretch (basic and acidic residues) spans 1-13; that stretch reads MAMKRKLNEHDVP. The interval 1-43 is disordered; that stretch reads MAMKRKLNEHDVPEPESPQSPKRRASDASQSEPASPPAPTPAK. A Q motif motif is present at residues 47-75; it reads ASFAELQLEPRLLRGIRDQKWGSPTAVQS. The Helicase ATP-binding domain maps to 78–249; it reads IPLALQGRDI…SLLCNDPVVL (172 aa). 91 to 98 is an ATP binding site; the sequence is SGTGTGKT. Positions 197–200 match the DEAD box motif; the sequence is DEGD. The 210-residue stretch at 260–469 folds into the Helicase C-terminal domain; the sequence is RVKQYVIKCA…NYNFDMKRLE (210 aa). The interval 352 to 374 is disordered; sequence SQKKADESRPKKKPKTDKEAKND.

This sequence belongs to the DEAD box helicase family. DDX56/DBP9 subfamily.

The protein resides in the nucleus. Its subcellular location is the nucleolus. The catalysed reaction is ATP + H2O = ADP + phosphate + H(+). ATP-binding RNA helicase involved in the biogenesis of 60S ribosomal subunits and is required for the normal formation of 25S and 5.8S rRNAs. This Phaeosphaeria nodorum (strain SN15 / ATCC MYA-4574 / FGSC 10173) (Glume blotch fungus) protein is ATP-dependent RNA helicase DBP9 (DBP9).